Consider the following 491-residue polypeptide: Chromosomal replication initiator protein DnaA (491 aa).

The domain I, interacts with DnaA modulators stretch occupies residues 1–69 (MTTWDKCLKK…TIQECHGNDL (69 aa)). The interval 69–154 (LIIEYSNKKF…KEDEEYSFGL (86 aa)) is domain II. Residues 155–371 (PLKEKYVFDS…GALNRVLTTS (217 aa)) are domain III, AAA+ region. The ATP site is built by G199, G201, K202, and T203. A domain IV, binds dsDNA region spans residues 372–491 (KFNHKDPTIE…YELLLDKISR (120 aa)).

It belongs to the DnaA family. Oligomerizes as a right-handed, spiral filament on DNA at oriC.

The protein localises to the cytoplasm. Its function is as follows. Plays an essential role in the initiation and regulation of chromosomal replication. ATP-DnaA binds to the origin of replication (oriC) to initiate formation of the DNA replication initiation complex once per cell cycle. Binds the DnaA box (a 9 base pair repeat at the origin) and separates the double-stranded (ds)DNA. Forms a right-handed helical filament on oriC DNA; dsDNA binds to the exterior of the filament while single-stranded (ss)DNA is stabiized in the filament's interior. The ATP-DnaA-oriC complex binds and stabilizes one strand of the AT-rich DNA unwinding element (DUE), permitting loading of DNA polymerase. After initiation quickly degrades to an ADP-DnaA complex that is not apt for DNA replication. Binds acidic phospholipids. The protein is Chromosomal replication initiator protein DnaA of Francisella tularensis subsp. holarctica (strain FTNF002-00 / FTA).